The chain runs to 188 residues: Peptidyl-tRNA hydrolase (188 aa).

Position 15 (F15) interacts with tRNA. The Proton acceptor role is filled by H20. TRNA is bound by residues Y64, N66, and N112.

Belongs to the PTH family. In terms of assembly, monomer.

It localises to the cytoplasm. It carries out the reaction an N-acyl-L-alpha-aminoacyl-tRNA + H2O = an N-acyl-L-amino acid + a tRNA + H(+). Its function is as follows. Hydrolyzes ribosome-free peptidyl-tRNAs (with 1 or more amino acids incorporated), which drop off the ribosome during protein synthesis, or as a result of ribosome stalling. Functionally, catalyzes the release of premature peptidyl moieties from peptidyl-tRNA molecules trapped in stalled 50S ribosomal subunits, and thus maintains levels of free tRNAs and 50S ribosomes. This is Peptidyl-tRNA hydrolase from Borrelia duttonii (strain Ly).